A 78-amino-acid chain; its full sequence is MATKDLTFEQAMEKLEGIVSKLEEGDVPLEKAIEYYQEGMNLSKLCSEKLNHVQDKMVQIMNEQGELEPFDIQEDSSS.

The protein belongs to the XseB family. In terms of assembly, heterooligomer composed of large and small subunits.

Its subcellular location is the cytoplasm. It carries out the reaction Exonucleolytic cleavage in either 5'- to 3'- or 3'- to 5'-direction to yield nucleoside 5'-phosphates.. In terms of biological role, bidirectionally degrades single-stranded DNA into large acid-insoluble oligonucleotides, which are then degraded further into small acid-soluble oligonucleotides. The chain is Exodeoxyribonuclease 7 small subunit from Oceanobacillus iheyensis (strain DSM 14371 / CIP 107618 / JCM 11309 / KCTC 3954 / HTE831).